A 222-amino-acid chain; its full sequence is Sororin-like protein (222 aa).

The segment at 1 to 189 (MEAPRSVGGR…VKQEKEDPVS (189 aa)) is disordered. The span at 24–33 (SRSSQQSSSS) shows a compositional bias: low complexity. Residues 47-60 (RLVEQTTLKEKPKD) show a composition bias toward basic and acidic residues. Residues 88 to 105 (ADLASPASAPSRPQTSRS) show a composition bias toward low complexity. The short motif at 155 to 162 (GKKTRQAS) is the Nuclear localization signal element. The segment covering 167–179 (KTLKVAPKKRQRT) has biased composition (basic residues). The segment at 192–214 (CQDYIEKQKAYFAEIDAFELPVE) is C-terminal Sororin domain.

The protein belongs to the sororin family.

It localises to the nucleus. In terms of biological role, regulator of sister chromatid cohesion in mitosis stabilizing cohesin complex association with chromatin. Antagonizes the action of WAPL proteins (WAPL1 and WAPL2) which stimulates cohesin dissociation from chromatin, particularly during somatic division in root cells and meiocytes during anaphase I. Required for centromeric sister chromatid cohesion during male meiosis (microsporogenesis). Cohesion ensures that chromosome partitioning is accurate in dividing cells and may play an important role in DNA repair. This Arabidopsis thaliana (Mouse-ear cress) protein is Sororin-like protein.